We begin with the raw amino-acid sequence, 447 residues long: ATP synthase subunit beta (447 aa).

Residue 147–154 (GGAGVGKT) coordinates ATP.

Belongs to the ATPase alpha/beta chains family. In terms of assembly, F-type ATPases have 2 components, CF(1) - the catalytic core - and CF(0) - the membrane proton channel. CF(1) has five subunits: alpha(3), beta(3), gamma(1), delta(1), epsilon(1). CF(0) has three main subunits: a(1), b(2) and c(9-12). The alpha and beta chains form an alternating ring which encloses part of the gamma chain. CF(1) is attached to CF(0) by a central stalk formed by the gamma and epsilon chains, while a peripheral stalk is formed by the delta and b chains.

It is found in the cell membrane. The catalysed reaction is ATP + H2O + 4 H(+)(in) = ADP + phosphate + 5 H(+)(out). In terms of biological role, produces ATP from ADP in the presence of a proton gradient across the membrane. The catalytic sites are hosted primarily by the beta subunits. This is ATP synthase subunit beta from Carsonella ruddii (strain PV).